Consider the following 203-residue polypeptide: Twist-related protein 1 (203 aa).

A compositionally biased stretch (low complexity) spans 1 to 18 (MMQDVSSSPVSPADDSLS). The tract at residues 1 to 106 (MMQDVSSSPV…GGGSPQSYEE (106 aa)) is disordered. The segment covering 34–43 (RGGRKRRSSR) has biased composition (basic residues). 2 stretches are compositionally biased toward gly residues: residues 46 to 65 (AGGGAGPGGAAGGGVGGGDE) and 80 to 100 (GCGGGGGSAGGGGGSSSGGGS). One can recognise a bHLH domain in the interval 109–160 (TQRVMANVRERQRTQSLNEAFAALRKIIPTLPSDKLSKIQTLKLAARYIDFL). The interval 162-192 (QVLQSDELDSKMASCSYVAHERLSYAFSVWR) is sufficient for transactivation activity.

In terms of assembly, efficient DNA binding requires dimerization with another bHLH protein. Homodimer or heterodimer with E proteins such as TCF3. ID1 binds preferentially to TCF3 but does not interact efficiently with TWIST1 so ID1 levels control the amount of TCF3 available to dimerize with TWIST and thus determine the type of dimer formed.

Its subcellular location is the nucleus. Its function is as follows. Acts as a transcriptional regulator. Inhibits myogenesis by sequestrating E proteins, inhibiting trans-activation by MEF2, and inhibiting DNA-binding by MYOD1 through physical interaction. This interaction probably involves the basic domains of both proteins. Also represses expression of pro-inflammatory cytokines such as TNFA and IL1B. Regulates cranial suture patterning and fusion. Activates transcription as a heterodimer with E proteins. Regulates gene expression differentially, depending on dimer composition. Homodimers induce expression of FGFR2 and POSTN while heterodimers repress FGFR2 and POSTN expression and induce THBS1 expression. Heterodimerization is also required for osteoblast differentiation. Represses the activity of the circadian transcriptional activator: NPAS2-BMAL1 heterodimer. This chain is Twist-related protein 1 (TWIST1), found in Saguinus oedipus (Cotton-top tamarin).